We begin with the raw amino-acid sequence, 282 residues long: Putative hydrolase Bcen_5340 (282 aa).

Mg(2+)-binding residues include Glu124, Glu126, and Asp155.

This sequence belongs to the FAH family. Requires Mg(2+) as cofactor.

In Burkholderia orbicola (strain AU 1054), this protein is Putative hydrolase Bcen_5340.